The sequence spans 215 residues: Sodium channel regulatory subunit beta-3 (215 aa).

The N-terminal stretch at 1-24 is a signal peptide; sequence MPAFNRLLPLASLVLIYWVRVCFP. One can recognise an Ig-like C2-type domain in the interval 25 to 138; the sequence is VCVEVPSETE…EAHRPFVKTT (114 aa). The Extracellular segment spans residues 25–156; it reads VCVEVPSETE…EEAGEDFTSV (132 aa). 2 disulfides stabilise this stretch: cysteine 26–cysteine 48 and cysteine 45–cysteine 120. Residues asparagine 95, asparagine 109, asparagine 113, and asparagine 121 are each glycosylated (N-linked (GlcNAc...) asparagine). The chain crosses the membrane as a helical span at residues 157–178; the sequence is VSEIMMYILLVFLTLWLFIEMI. Over 179-215 the chain is Cytoplasmic; that stretch reads YCYRKVSKAEEAAQENASDYLAIPSENKENSVVPVEE.

The protein belongs to the sodium channel auxiliary subunit SCN3B (TC 8.A.17) family. In terms of assembly, a voltage-gated sodium (Nav) channel consists of an ion-conducting pore-forming alpha subunit functional on its own that is regulated by one or more beta subunits. Forms homodimers and homotrimers. SCN3B is non-covalently associated with alpha subunits and induces the formation of alpha subunit oligomers, including trimers. Interacts with SCN5A/Nav1.5; regulatory subunit of SCN5A/Nav1.5. Interacts with SCN7A/Nav2.1; probable regulatory subunit of SCN7A/Nav2.1. Interacts with SCN10A; regulatory subunit of SCN10A/Nav1.8. Interacts with NFASC; probably involved in targeting the sodium channels to the nodes of Ranvier. Post-translationally, intramolecular disulfide bonds favor the voltage-gated sodium channel oligomeric complex assembly. In terms of processing, N-glycosylated.

The protein localises to the cell membrane. Functionally, regulatory subunit of multiple voltage-gated sodium (Nav) channels directly mediating the depolarization of excitable membranes. Navs, also called VGSCs (voltage-gated sodium channels) or VDSCs (voltage-dependent sodium channels), operate by switching between closed and open conformations depending on the voltage difference across the membrane. In the open conformation they allow Na(+) ions to selectively pass through the pore, along their electrochemical gradient. The influx of Na+ ions provokes membrane depolarization, initiating the propagation of electrical signals throughout cells and tissues. The accessory beta subunits participate in localization and functional modulation of the Nav channels. Modulates the activity of SCN2A/Nav1.2, causing a hyperpolarizing shift in the voltage-dependence of inactivation of the channel and increasing the fraction of channels operating in the fast gating mode. Modulates the activity of SCN5A/Nav1.5. Could also regulate the atypical sodium channel SCN7A/Nav2.1. Modulates the activity of SCN10A/Nav1.8, regulating its oligomerization and accelerating the recovery from inactivation. This chain is Sodium channel regulatory subunit beta-3, found in Mus musculus (Mouse).